Consider the following 89-residue polypeptide: Small ribosomal subunit protein uS15 (89 aa).

The protein belongs to the universal ribosomal protein uS15 family. In terms of assembly, part of the 30S ribosomal subunit. Forms a bridge to the 50S subunit in the 70S ribosome, contacting the 23S rRNA.

One of the primary rRNA binding proteins, it binds directly to 16S rRNA where it helps nucleate assembly of the platform of the 30S subunit by binding and bridging several RNA helices of the 16S rRNA. In terms of biological role, forms an intersubunit bridge (bridge B4) with the 23S rRNA of the 50S subunit in the ribosome. The protein is Small ribosomal subunit protein uS15 of Acinetobacter baumannii (strain AB307-0294).